The sequence spans 179 residues: Large ribosomal subunit protein uL5 (179 aa).

It belongs to the universal ribosomal protein uL5 family. Part of the 50S ribosomal subunit; part of the 5S rRNA/L5/L18/L25 subcomplex. Contacts the 5S rRNA and the P site tRNA. Forms a bridge to the 30S subunit in the 70S ribosome.

Its function is as follows. This is one of the proteins that bind and probably mediate the attachment of the 5S RNA into the large ribosomal subunit, where it forms part of the central protuberance. In the 70S ribosome it contacts protein S13 of the 30S subunit (bridge B1b), connecting the 2 subunits; this bridge is implicated in subunit movement. Contacts the P site tRNA; the 5S rRNA and some of its associated proteins might help stabilize positioning of ribosome-bound tRNAs. The sequence is that of Large ribosomal subunit protein uL5 from Francisella tularensis subsp. novicida (strain U112).